A 264-amino-acid polypeptide reads, in one-letter code: Glutamate 5-kinase (264 aa).

Lys15 lines the ATP pocket. Residues Ser55, Asp142, and Asn154 each contribute to the substrate site. ATP contacts are provided by residues Ser174–Asp175 and Thr216–Lys222.

This sequence belongs to the glutamate 5-kinase family.

The protein localises to the cytoplasm. The enzyme catalyses L-glutamate + ATP = L-glutamyl 5-phosphate + ADP. It participates in amino-acid biosynthesis; L-proline biosynthesis; L-glutamate 5-semialdehyde from L-glutamate: step 1/2. Functionally, catalyzes the transfer of a phosphate group to glutamate to form L-glutamate 5-phosphate. In Alkaliphilus metalliredigens (strain QYMF), this protein is Glutamate 5-kinase.